A 529-amino-acid chain; its full sequence is Peptide chain release factor 3 (529 aa).

Positions 11–280 (AKRRTFAIIS…GLVEWAPAPM (270 aa)) constitute a tr-type G domain. Residues 20–27 (SHPDAGKT), 88–92 (DTPGH), and 142–145 (NKLD) contribute to the GTP site.

The protein belongs to the TRAFAC class translation factor GTPase superfamily. Classic translation factor GTPase family. PrfC subfamily.

It is found in the cytoplasm. Increases the formation of ribosomal termination complexes and stimulates activities of RF-1 and RF-2. It binds guanine nucleotides and has strong preference for UGA stop codons. It may interact directly with the ribosome. The stimulation of RF-1 and RF-2 is significantly reduced by GTP and GDP, but not by GMP. The sequence is that of Peptide chain release factor 3 from Shigella dysenteriae serotype 1 (strain Sd197).